A 701-amino-acid chain; its full sequence is Polyribonucleotide nucleotidyltransferase (701 aa).

Mg(2+) contacts are provided by Asp-487 and Asp-493. The KH domain maps to 554-613; sequence PTMIAMKIDTDKIRDVIGKGGATIRAICEETKASIDIEDDGSIKIFGETKEAADAAKQRI. One can recognise an S1 motif domain in the interval 623–691; it reads GKIYVGKVER…NRGRIKLSIK (69 aa).

This sequence belongs to the polyribonucleotide nucleotidyltransferase family. Component of the RNA degradosome, which is a multiprotein complex involved in RNA processing and mRNA degradation. Mg(2+) serves as cofactor.

The protein resides in the cytoplasm. The catalysed reaction is RNA(n+1) + phosphate = RNA(n) + a ribonucleoside 5'-diphosphate. Its function is as follows. Involved in mRNA degradation. Catalyzes the phosphorolysis of single-stranded polyribonucleotides processively in the 3'- to 5'-direction. This chain is Polyribonucleotide nucleotidyltransferase, found in Pseudomonas putida (strain ATCC 47054 / DSM 6125 / CFBP 8728 / NCIMB 11950 / KT2440).